The sequence spans 150 residues: Arginine repressor (150 aa).

The protein belongs to the ArgR family.

It localises to the cytoplasm. Its pathway is amino-acid biosynthesis; L-arginine biosynthesis [regulation]. Its function is as follows. Regulates arginine biosynthesis genes. The protein is Arginine repressor of Clostridium kluyveri (strain NBRC 12016).